Consider the following 618-residue polypeptide: Tyrosine-protein kinase ZAP-70 (618 aa).

The 93-residue stretch at 10 to 102 (FFYGSISRAE…GLPCNLRKPC (93 aa)) folds into the SH2 1 domain. The interval 103 to 162 (NRPPGLEPQPGVFDCLRDAMVRDYVRQTWKLEGDALEQAIISQAPQVEKLIATTAHERMP) is interdomain A. Positions 163–254 (WYHSSLTREE…GLIYRLKEVC (92 aa)) constitute an SH2 2 domain. Y248 carries the phosphotyrosine modification. Positions 255–336 (PNSSASAAVA…KKLFLKRENL (82 aa)) are interdomain B. The disordered stretch occupies residues 270-320 (AHPSTFTQPQRRVDTLNSDGYTPEPARLASSTDKPRPMPMDTSVYESPYSD). Over residues 273 to 289 (STFTQPQRRVDTLNSDG) the composition is skewed to polar residues. Phosphoserine is present on S287. Y290 carries the phosphotyrosine modification. At Y314 the chain carries Phosphotyrosine; by LCK. Y318 bears the Phosphotyrosine mark. A Protein kinase domain is found at 337-597 (LVADIELGCG…VEQRMRNYYY (261 aa)). Residues 343 to 351 (LGCGNFGSV) and K368 contribute to the ATP site. Catalysis depends on D460, which acts as the Proton acceptor. Phosphotyrosine is present on residues Y491 and Y492. Residue K543 forms a Glycyl lysine isopeptide (Lys-Gly) (interchain with G-Cter in ubiquitin) linkage.

This sequence belongs to the protein kinase superfamily. Tyr protein kinase family. SYK/ZAP-70 subfamily. As to quaternary structure, interacts with CD247/CD3Z; this interaction docks ZAP70 at the stimulated TCR. Interacts with NFAM1. Interacts with adapter protein SLA; this interaction negatively regulates T-cell receptor signaling. Interacts with VAV1. Interacts with CBL; this interaction promotes ubiquitination, internalization and subsequent degradation of CD247/CD3Z. Identified in a complex with CBL and UBE2L3. Interacts with SHB. Interacts with adapter protein SLA2; this interaction negatively regulates T-cell receptor signaling. Interacts with CBLB. Interacts (via SH2 domains) with RHOH; this interaction regulates ZAP70 subcellular localization. Interacts with DEF6. Interacts (ubiquitinated form) with OTUD7B and UBASH3B. In terms of processing, phosphorylated on tyrosine residues upon T-cell antigen receptor (TCR) stimulation. Phosphorylation of Tyr-314 and Tyr-314 are essential for ZAP70 positive function on T-lymphocyte activation whereas Tyr-290 has a negative regulatory role. Within the C-terminal kinase domain, Tyr-491 and Tyr-492 are phosphorylated after TCR induction, Tyr-491 playing a negative regulatory role and Tyr-492 a positive. Tyr-492 is dephosphorylated by PTN22. Ubiquitinated in response to T cell activation. Deubiquitinated by OTUD7B. Isoform 1 and isoform 2 are expressed in thymus, spleen and lymph nodes.

The protein localises to the cytoplasm. It localises to the cell membrane. The catalysed reaction is L-tyrosyl-[protein] + ATP = O-phospho-L-tyrosyl-[protein] + ADP + H(+). Activated by phosphorylation at Tyr-492 in the activation loop. Tyrosine kinase that plays an essential role in regulation of the adaptive immune response. Regulates motility, adhesion and cytokine expression of mature T-cells, as well as thymocyte development. Also contributes to the development and activation of primary B-lymphocytes. When antigen presenting cells (APC) activate T-cell receptor (TCR), a serie of phosphorylations lead to the recruitment of ZAP70 to the doubly phosphorylated TCR component CD3Z through ITAM motif at the plasma membrane. This recruitment serves to localization to the stimulated TCR and to relieve its autoinhibited conformation. Release of ZAP70 active conformation is further stabilized by phosphorylation mediated by LCK. Subsequently, ZAP70 phosphorylates at least 2 essential adapter proteins: LAT and LCP2. In turn, a large number of signaling molecules are recruited and ultimately lead to lymphokine production, T-cell proliferation and differentiation. Furthermore, ZAP70 controls cytoskeleton modifications, adhesion and mobility of T-lymphocytes, thus ensuring correct delivery of effectors to the APC. ZAP70 is also required for TCR-CD3Z internalization and degradation through interaction with the E3 ubiquitin-protein ligase CBL and adapter proteins SLA and SLA2. Thus, ZAP70 regulates both T-cell activation switch on and switch off by modulating TCR expression at the T-cell surface. During thymocyte development, ZAP70 promotes survival and cell-cycle progression of developing thymocytes before positive selection (when cells are still CD4/CD8 double negative). Additionally, ZAP70-dependent signaling pathway may also contribute to primary B-cells formation and activation through B-cell receptor (BCR). The protein is Tyrosine-protein kinase ZAP-70 (Zap70) of Mus musculus (Mouse).